Reading from the N-terminus, the 1168-residue chain is Transcription-repair-coupling factor (1168 aa).

The region spanning 633–794 (DMQKSRPMDR…MLGVRDLSVI (162 aa)) is the Helicase ATP-binding domain. Residue 646–653 (GDVGYGKT) participates in ATP binding. The DEEQ box motif lies at 747–750 (DEEQ). The Helicase C-terminal domain maps to 808 to 969 (VLEQNMSFIK…GFKIAMRDLN (162 aa)).

It in the N-terminal section; belongs to the UvrB family. This sequence in the C-terminal section; belongs to the helicase family. RecG subfamily.

Its subcellular location is the cytoplasm. Functionally, couples transcription and DNA repair by recognizing RNA polymerase (RNAP) stalled at DNA lesions. Mediates ATP-dependent release of RNAP and its truncated transcript from the DNA, and recruitment of nucleotide excision repair machinery to the damaged site. This chain is Transcription-repair-coupling factor, found in Staphylococcus aureus (strain bovine RF122 / ET3-1).